A 315-amino-acid chain; its full sequence is Ribosomal protein L11 methyltransferase (315 aa).

The S-adenosyl-L-methionine site is built by Thr-161, Gly-182, Asp-204, and Asn-248.

Belongs to the methyltransferase superfamily. PrmA family.

The protein resides in the cytoplasm. The enzyme catalyses L-lysyl-[protein] + 3 S-adenosyl-L-methionine = N(6),N(6),N(6)-trimethyl-L-lysyl-[protein] + 3 S-adenosyl-L-homocysteine + 3 H(+). Methylates ribosomal protein L11. The sequence is that of Ribosomal protein L11 methyltransferase from Shouchella clausii (strain KSM-K16) (Alkalihalobacillus clausii).